We begin with the raw amino-acid sequence, 121 residues long: Large ribosomal subunit protein bL12 (121 aa).

This sequence belongs to the bacterial ribosomal protein bL12 family. In terms of assembly, homodimer. Part of the ribosomal stalk of the 50S ribosomal subunit. Forms a multimeric L10(L12)X complex, where L10 forms an elongated spine to which 2 to 4 L12 dimers bind in a sequential fashion. Binds GTP-bound translation factors.

Its function is as follows. Forms part of the ribosomal stalk which helps the ribosome interact with GTP-bound translation factors. Is thus essential for accurate translation. The sequence is that of Large ribosomal subunit protein bL12 from Pectobacterium carotovorum subsp. carotovorum (strain PC1).